Here is a 353-residue protein sequence, read N- to C-terminus: Protein pelota homolog (353 aa).

This sequence belongs to the eukaryotic release factor 1 family. Pelota subfamily. Monomer. A divalent metal cation is required as a cofactor.

Its subcellular location is the cytoplasm. Its function is as follows. May function in recognizing stalled ribosomes, interact with stem-loop structures in stalled mRNA molecules, and effect endonucleolytic cleavage of the mRNA. May play a role in the release non-functional ribosomes and degradation of damaged mRNAs. Has endoribonuclease activity. This is Protein pelota homolog from Methanopyrus kandleri (strain AV19 / DSM 6324 / JCM 9639 / NBRC 100938).